Reading from the N-terminus, the 487-residue chain is 2-aminomuconic semialdehyde dehydrogenase (487 aa).

Residue 231–236 (GSTATA) participates in NAD(+) binding. E253 serves as the catalytic Proton acceptor. The Nucleophile role is filled by C287.

It belongs to the aldehyde dehydrogenase family.

Its subcellular location is the cytoplasm. The enzyme catalyses 2-aminomuconate 6-semialdehyde + NAD(+) + H2O = (2Z,4E)-2-aminomuconate + NADH + 2 H(+). It functions in the pathway amino-acid degradation; L-kynurenine degradation. Catalyzes the NAD-dependent oxidation of 2-aminomuconic semialdehyde of the kynurenine metabolic pathway in L-tryptophan degradation. This Danio rerio (Zebrafish) protein is 2-aminomuconic semialdehyde dehydrogenase (aldh8a1).